Reading from the N-terminus, the 228-residue chain is Large ribosomal subunit protein bL25 (228 aa).

Residues 196–228 (EEAAVAEAQSAESAEGKAEAEAEATNEKNKSEA) form a disordered region. Positions 209–228 (AEGKAEAEAEATNEKNKSEA) are enriched in basic and acidic residues.

Belongs to the bacterial ribosomal protein bL25 family. CTC subfamily. As to quaternary structure, part of the 50S ribosomal subunit; part of the 5S rRNA/L5/L18/L25 subcomplex. Contacts the 5S rRNA. Binds to the 5S rRNA independently of L5 and L18.

Its function is as follows. This is one of the proteins that binds to the 5S RNA in the ribosome where it forms part of the central protuberance. The chain is Large ribosomal subunit protein bL25 from Methylorubrum extorquens (strain CM4 / NCIMB 13688) (Methylobacterium extorquens).